The primary structure comprises 279 residues: Shikimate dehydrogenase (NADP(+)) (279 aa).

Residues 19–21 (SRS) and T66 contribute to the shikimate site. Catalysis depends on K70, which acts as the Proton acceptor. Shikimate-binding residues include N91 and D106. NADP(+) contacts are provided by residues 129–133 (GAGGA) and F222. Position 224 (Y224) interacts with shikimate. G243 contacts NADP(+).

Belongs to the shikimate dehydrogenase family. Homodimer.

It carries out the reaction shikimate + NADP(+) = 3-dehydroshikimate + NADPH + H(+). The protein operates within metabolic intermediate biosynthesis; chorismate biosynthesis; chorismate from D-erythrose 4-phosphate and phosphoenolpyruvate: step 4/7. Its function is as follows. Involved in the biosynthesis of the chorismate, which leads to the biosynthesis of aromatic amino acids. Catalyzes the reversible NADPH linked reduction of 3-dehydroshikimate (DHSA) to yield shikimate (SA). This chain is Shikimate dehydrogenase (NADP(+)), found in Anaeromyxobacter sp. (strain Fw109-5).